The chain runs to 125 residues: Small ribosomal subunit protein uS12 (125 aa).

The segment at 1–28 is disordered; it reads MPTISQLIGSERKRLTRKTKSPALKSCP. The residue at position 89 (D89) is a 3-methylthioaspartic acid. Residues 104–125 form a disordered region; it reads TAGVKDRRQSRSKYGAKAPKNN.

The protein belongs to the universal ribosomal protein uS12 family. In terms of assembly, part of the 30S ribosomal subunit. Contacts proteins S8 and S17. May interact with IF1 in the 30S initiation complex.

Functionally, with S4 and S5 plays an important role in translational accuracy. Interacts with and stabilizes bases of the 16S rRNA that are involved in tRNA selection in the A site and with the mRNA backbone. Located at the interface of the 30S and 50S subunits, it traverses the body of the 30S subunit contacting proteins on the other side and probably holding the rRNA structure together. The combined cluster of proteins S8, S12 and S17 appears to hold together the shoulder and platform of the 30S subunit. The chain is Small ribosomal subunit protein uS12 from Prochlorococcus marinus (strain MIT 9515).